We begin with the raw amino-acid sequence, 368 residues long: Flagellar P-ring protein (368 aa).

The N-terminal stretch at 1–22 is a signal peptide; that stretch reads MLIPLARAVLALALLGAGAAHA.

It belongs to the FlgI family. As to quaternary structure, the basal body constitutes a major portion of the flagellar organelle and consists of four rings (L,P,S, and M) mounted on a central rod.

It is found in the periplasm. The protein localises to the bacterial flagellum basal body. Assembles around the rod to form the L-ring and probably protects the motor/basal body from shearing forces during rotation. The polypeptide is Flagellar P-ring protein (Bordetella bronchiseptica (strain ATCC BAA-588 / NCTC 13252 / RB50) (Alcaligenes bronchisepticus)).